A 268-amino-acid chain; its full sequence is Tryptophan synthase alpha chain (268 aa).

Active-site proton acceptor residues include Glu-49 and Asp-60.

This sequence belongs to the TrpA family. As to quaternary structure, tetramer of two alpha and two beta chains.

It catalyses the reaction (1S,2R)-1-C-(indol-3-yl)glycerol 3-phosphate + L-serine = D-glyceraldehyde 3-phosphate + L-tryptophan + H2O. It functions in the pathway amino-acid biosynthesis; L-tryptophan biosynthesis; L-tryptophan from chorismate: step 5/5. The alpha subunit is responsible for the aldol cleavage of indoleglycerol phosphate to indole and glyceraldehyde 3-phosphate. This Yersinia pseudotuberculosis serotype O:1b (strain IP 31758) protein is Tryptophan synthase alpha chain.